We begin with the raw amino-acid sequence, 568 residues long: NADPH oxidase 3 (568 aa).

Residues 1-13 (MMGCWILNEGLST) lie on the Cytoplasmic side of the membrane. The helical transmembrane segment at 14 to 34 (ILVLSWLGINFYLFIDTFYWY) threads the bilayer. The Extracellular segment spans residues 35-51 (EEEESFHYTRVILGSTL). Residues 52 to 72 (AWARASALCLNFNCMLILIPV) form a helical membrane-spanning segment. Positions 55 to 284 (RASALCLNFN…VVLYACERII (230 aa)) constitute a Ferric oxidoreductase domain. Over 73–103 (SRNLISFIRGTSICCRGPWRRQLDKNLRFHK) the chain is Cytoplasmic. A helical transmembrane segment spans residues 104 to 124 (LVAYGIAVNATIHIVAHFFNL). At 125 to 167 (ERYHWSQSEEAQGLLAALSKLGNTPNESYLNPVRTFPTNTTTE) the chain is on the extracellular side. The N-linked (GlcNAc...) asparagine glycan is linked to Asn163. The helical transmembrane segment at 168–188 (LLRTIAGVTGLVISLALVLIM) threads the bilayer. The Cytoplasmic segment spans residues 189 to 201 (TSSTEFIRQASYE). The chain crosses the membrane as a helical span at residues 202 to 222 (LFWYTHHVFIVFFLSLAIHGT). Topologically, residues 223–395 (GRIVRGQTQD…DGPFGTALTD (173 aa)) are extracellular. A glycan (N-linked (GlcNAc...) asparagine) is linked at Asn238. The FAD-binding FR-type domain occupies 285–395 (RFWRFQQEVV…DGPFGTALTD (111 aa)). Residues 396-416 (VFHYPVCVCVAAGIGVTPFAA) traverse the membrane as a helical segment. Residues 417–568 (LLKSIWYKCS…VHFYYNKESF (152 aa)) lie on the Cytoplasmic side of the membrane.

As to quaternary structure, interacts with CYBA/p22phox. Heterodimerization with CYBA/p22phox is essential for its activity and cell membrane localization. It depends on heme as a cofactor. In terms of processing, N-glycosylated in a CYBA/p22phox-dependent manner.

The protein resides in the cell membrane. It catalyses the reaction NADPH + 2 O2 = 2 superoxide + NADP(+) + H(+). Activated by the ototoxic drug cisplatin. Activated by NOXO1. Cooperatively activated by NCF1 and NCF2 or NOXA1 in a phorbol 12-myristate 13-acetate (PMA)-dependent manner. Inhibited by diphenyleneiodonium chloride. In terms of biological role, NADPH oxidase that catalyzes the generation of superoxide from molecular oxygen utilizing NADPH as an electron donor, upon formation of a complex with CYBA/p22phox. Plays a role in the biogenesis of otoconia/otolith, which are crystalline structures of the inner ear involved in the perception of gravity. This is NADPH oxidase 3 (NOX3) from Homo sapiens (Human).